The sequence spans 311 residues: Ornithine carbamoyltransferase (311 aa).

Residues 57–60 (STRT), Gln84, Arg108, and 135–138 (HPCQ) contribute to the carbamoyl phosphate site. Residues Asn166, Asp230, and 234–235 (SM) contribute to the L-ornithine site. Residues 270–271 (CL) and Arg298 contribute to the carbamoyl phosphate site.

The protein belongs to the aspartate/ornithine carbamoyltransferase superfamily. OTCase family.

It is found in the cytoplasm. It catalyses the reaction carbamoyl phosphate + L-ornithine = L-citrulline + phosphate + H(+). Its pathway is amino-acid biosynthesis; L-arginine biosynthesis; L-arginine from L-ornithine and carbamoyl phosphate: step 1/3. Reversibly catalyzes the transfer of the carbamoyl group from carbamoyl phosphate (CP) to the N(epsilon) atom of ornithine (ORN) to produce L-citrulline. The sequence is that of Ornithine carbamoyltransferase from Carboxydothermus hydrogenoformans (strain ATCC BAA-161 / DSM 6008 / Z-2901).